Reading from the N-terminus, the 384-residue chain is WD repeat-containing protein 55 (384 aa).

Residues 1–33 (MDPTCQESPAEDSNNEEDLDSTKAAPRIRDTPE) form a disordered region. Acidic residues predominate over residues 9 to 19 (PAEDSNNEEDL). 7 WD repeats span residues 36-75 (VLEAPASGLAFHPTRDLLAAGDVDGDVFVFAYSCQEGETK), 82-121 (HHLKSCRAVVFSEDGQKLVTVSKDKAIHVLDVEQGQLERR), 125-163 (AHSAPINSLLLVDENVLVTGDDTGGIRLWDQRKEGPLMD), 166-205 (QHEEYIADMALDPAKKLLLTASGDGCLGVFNIKRRRFELL), 208-247 (PQSGDLTSVALMKYGKKVACGSSEGTIYLFNWNGFGATSD), 250-289 (ALRAESIDCMVPVTENLLCTGSTDGIIRAVNILPNRVVGT), and 293-332 (HAGEPVEELALSHCGHFLASSGHDQRLKFWDMTQLRTVVV). Residues serine 354 and serine 383 each carry the phosphoserine modification. The segment at 362-384 (LREDEEEAKAPEEVSGESDDDSD) is disordered. Positions 375 to 384 (VSGESDDDSD) are enriched in acidic residues.

It belongs to the WD repeat WDR55 family.

The protein localises to the nucleus. The protein resides in the nucleolus. Its subcellular location is the cytoplasm. Its function is as follows. Nucleolar protein that acts as a modulator of rRNA synthesis. Plays a central role during organogenesis. This chain is WD repeat-containing protein 55 (Wdr55), found in Rattus norvegicus (Rat).